We begin with the raw amino-acid sequence, 211 residues long: Troponin I, cardiac muscle (211 aa).

A disordered region spans residues 1 to 25; it reads MADESSDAAGEPQPAPAPVRRRSSA. Ala-2 carries the N-acetylalanine modification. Phosphoserine occurs at positions 5 and 6. Ser-23 and Ser-24 each carry phosphoserine; by PKA and PKD/PRKD1. Position 27 is a phosphotyrosine (Tyr-27). Residue Thr-32 is modified to Phosphothreonine; by STK4/MST1. Residues 33–80 are involved in binding TNC; the sequence is EPHAKKKSKISASRKLQLKTLMLQIAKQEMEREAEERRGEKGRVLSTR. Phosphoserine; by PKC/PRKCE is present on residues Ser-43 and Ser-45. Phosphothreonine; by STK4/MST1 is present on Thr-52. Ser-78 carries the phosphoserine modification. Thr-79 carries the phosphothreonine modification. Thr-130 and Thr-144 each carry phosphothreonine; by STK4/MST1. Positions 130–151 are involved in binding TNC and actin; sequence TQKIYDLRGKFKRPTLRRVRIS. Phosphoserine; by PAK3 is present on Ser-151. Phosphoserine occurs at positions 167 and 200.

The protein belongs to the troponin I family. In terms of assembly, interacts with TRIM63. Binds to actin and tropomyosin. Interacts with STK4/MST1. Phosphorylated at Ser-23 and Ser-24 by PRKD1; phosphorylation reduces myofilament calcium sensitivity. Phosphorylated preferentially at Thr-32. Phosphorylation by STK4/MST1 alters its binding affinity to TNNC1 (cardiac Tn-C) and TNNT2 (cardiac Tn-T). Phosphorylated at Ser-43 and Ser-45 by PRKCE; phosphorylation increases myocardium contractile dysfunction.

Troponin I is the inhibitory subunit of troponin, the thin filament regulatory complex which confers calcium-sensitivity to striated muscle actomyosin ATPase activity. The sequence is that of Troponin I, cardiac muscle (Tnni3) from Rattus norvegicus (Rat).